A 1463-amino-acid polypeptide reads, in one-letter code: DNA polymerase III PolC-type (1463 aa).

An Exonuclease domain is found at 425–581 (YVVFDVETTG…YDAEATGRLL (157 aa)).

The protein belongs to the DNA polymerase type-C family. PolC subfamily.

It is found in the cytoplasm. The enzyme catalyses DNA(n) + a 2'-deoxyribonucleoside 5'-triphosphate = DNA(n+1) + diphosphate. Required for replicative DNA synthesis. This DNA polymerase also exhibits 3' to 5' exonuclease activity. In Streptococcus pneumoniae serotype 2 (strain D39 / NCTC 7466), this protein is DNA polymerase III PolC-type.